A 329-amino-acid polypeptide reads, in one-letter code: Ferredoxin--NAD(P)(+) reductase CarAd (329 aa).

A 2Fe-2S ferredoxin-type domain is found at 2–92 (YQLKIEGQAP…DLRIKVAVQD (91 aa)). The [2Fe-2S] cluster site is built by C35, C40, C43, and C76. Positions 100–200 (ISRMEAEVVE…TGPMGTSFFR (101 aa)) constitute an FAD-binding FR-type domain.

In terms of assembly, monomer. Carbazole 1,9a-dioxygenase complex consists of a terminal oxygenase component CarAa, a ferredoxin reductase component CarAd and a ferredoxin component CarAc. [2Fe-2S] cluster serves as cofactor. Requires FAD as cofactor.

The enzyme catalyses 2 reduced [2Fe-2S]-[ferredoxin] + NAD(+) + H(+) = 2 oxidized [2Fe-2S]-[ferredoxin] + NADH. It catalyses the reaction 2 reduced [2Fe-2S]-[ferredoxin] + NADP(+) + H(+) = 2 oxidized [2Fe-2S]-[ferredoxin] + NADPH. Its function is as follows. Part of the multicomponent carbazole 1,9a-dioxygenase (CARDO), that converts carbazole (CAR) into 2-aminobiphenyl-2,3-diol. It can use both NAD and NADP as electron donors, but NAD is supposed to be the physiological electron donor. The sequence is that of Ferredoxin--NAD(P)(+) reductase CarAd (carAd) from Metapseudomonas resinovorans (Pseudomonas resinovorans).